The sequence spans 126 residues: Large ribosomal subunit protein eL8 (126 aa).

It belongs to the eukaryotic ribosomal protein eL8 family. Part of the 50S ribosomal subunit. Probably part of the RNase P complex.

It localises to the cytoplasm. Its function is as follows. Multifunctional RNA-binding protein that recognizes the K-turn motif in ribosomal RNA, the RNA component of RNase P, box H/ACA, box C/D and box C'/D' sRNAs. The chain is Large ribosomal subunit protein eL8 from Sulfolobus acidocaldarius (strain ATCC 33909 / DSM 639 / JCM 8929 / NBRC 15157 / NCIMB 11770).